The sequence spans 431 residues: Mitochondrial distribution and morphology protein 12 (431 aa).

The SMP-LTD domain maps to 1 to 431; that stretch reads MSIDLNWETL…VYPSFWTFLV (431 aa). 2 disordered regions span residues 68–153 and 209–289; these read DFYE…GVST and QSHT…PKPE. The segment covering 69 to 96 has biased composition (acidic residues); that stretch reads FYEDLDDDDGGSDEDDEGSNSCQTDEEN. The segment covering 97–113 has biased composition (basic and acidic residues); that stretch reads EAAKTLRERRKMDRVER. Residues 115–129 show a composition bias toward polar residues; sequence ANGSSNVSNPPSYTD. A compositionally biased stretch (low complexity) spans 241-252; the sequence is SASTLAVSSSTT.

It belongs to the MDM12 family. As to quaternary structure, component of the ER-mitochondria encounter structure (ERMES) or MDM complex, composed of mmm1, mdm10, mdm12 and mdm34. A mmm1 homodimer associates with one molecule of mdm12 on each side in a pairwise head-to-tail manner, and the SMP-LTD domains of mmm1 and mdm12 generate a continuous hydrophobic tunnel for phospholipid trafficking.

Its subcellular location is the mitochondrion outer membrane. The protein resides in the endoplasmic reticulum membrane. Component of the ERMES/MDM complex, which serves as a molecular tether to connect the endoplasmic reticulum (ER) and mitochondria. Components of this complex are involved in the control of mitochondrial shape and protein biogenesis, and function in nonvesicular lipid trafficking between the ER and mitochondria. Mdm12 is required for the interaction of the ER-resident membrane protein mmm1 and the outer mitochondrial membrane-resident beta-barrel protein mdm10. The mdm12-mmm1 subcomplex functions in the major beta-barrel assembly pathway that is responsible for biogenesis of all mitochondrial outer membrane beta-barrel proteins, and acts in a late step after the SAM complex. The mdm10-mdm12-mmm1 subcomplex further acts in the TOM40-specific pathway after the action of the mdm12-mmm1 complex. Essential for establishing and maintaining the structure of mitochondria and maintenance of mtDNA nucleoids. This chain is Mitochondrial distribution and morphology protein 12, found in Sclerotinia sclerotiorum (strain ATCC 18683 / 1980 / Ss-1) (White mold).